Consider the following 450-residue polypeptide: tRNA-2-methylthio-N(6)-dimethylallyladenosine synthase (450 aa).

The MTTase N-terminal domain occupies 14–132; sequence GEFFIETWGC…FPNYLNEVKK (119 aa). 6 residues coordinate [4Fe-4S] cluster: Cys-23, Cys-59, Cys-93, Cys-169, Cys-173, and Cys-176. In terms of domain architecture, Radical SAM core spans 155 to 385; sequence RKNSMKAFVT…VEVLNEISAK (231 aa). Residues 388 to 450 form the TRAM domain; sequence KAYEGKIEEV…NSFSLTGEEI (63 aa).

It belongs to the methylthiotransferase family. MiaB subfamily. In terms of assembly, monomer. The cofactor is [4Fe-4S] cluster.

It is found in the cytoplasm. It catalyses the reaction N(6)-dimethylallyladenosine(37) in tRNA + (sulfur carrier)-SH + AH2 + 2 S-adenosyl-L-methionine = 2-methylsulfanyl-N(6)-dimethylallyladenosine(37) in tRNA + (sulfur carrier)-H + 5'-deoxyadenosine + L-methionine + A + S-adenosyl-L-homocysteine + 2 H(+). Functionally, catalyzes the methylthiolation of N6-(dimethylallyl)adenosine (i(6)A), leading to the formation of 2-methylthio-N6-(dimethylallyl)adenosine (ms(2)i(6)A) at position 37 in tRNAs that read codons beginning with uridine. The protein is tRNA-2-methylthio-N(6)-dimethylallyladenosine synthase of Clostridium botulinum (strain ATCC 19397 / Type A).